Here is a 544-residue protein sequence, read N- to C-terminus: Protein adenylyltransferase (544 aa).

Residues 63–216 form the Fido domain; that stretch reads FDTAYLCHIH…LEPMQHLFED (154 aa). Residues 93–94, 106–107, 163–167, and arginine 170 contribute to the ATP site; these read FA, RT, and EGNGR.

The protein resides in the secreted. It catalyses the reaction L-tyrosyl-[protein] + ATP = O-(5'-adenylyl)-L-tyrosyl-[protein] + diphosphate. It carries out the reaction L-threonyl-[protein] + ATP = 3-O-(5'-adenylyl)-L-threonyl-[protein] + diphosphate. In terms of biological role, adenylyltransferase involved in virulence by mediating the addition of adenosine 5'-monophosphate (AMP) to specific residue of host target proteins. The sequence is that of Protein adenylyltransferase (bepA) from Bartonella henselae (strain ATCC 49882 / DSM 28221 / CCUG 30454 / Houston 1) (Rochalimaea henselae).